The chain runs to 100 residues: Aspartyl/glutamyl-tRNA(Asn/Gln) amidotransferase subunit C (100 aa).

Belongs to the GatC family. In terms of assembly, heterotrimer of A, B and C subunits.

It carries out the reaction L-glutamyl-tRNA(Gln) + L-glutamine + ATP + H2O = L-glutaminyl-tRNA(Gln) + L-glutamate + ADP + phosphate + H(+). The catalysed reaction is L-aspartyl-tRNA(Asn) + L-glutamine + ATP + H2O = L-asparaginyl-tRNA(Asn) + L-glutamate + ADP + phosphate + 2 H(+). Allows the formation of correctly charged Asn-tRNA(Asn) or Gln-tRNA(Gln) through the transamidation of misacylated Asp-tRNA(Asn) or Glu-tRNA(Gln) in organisms which lack either or both of asparaginyl-tRNA or glutaminyl-tRNA synthetases. The reaction takes place in the presence of glutamine and ATP through an activated phospho-Asp-tRNA(Asn) or phospho-Glu-tRNA(Gln). In Erythrobacter litoralis (strain HTCC2594), this protein is Aspartyl/glutamyl-tRNA(Asn/Gln) amidotransferase subunit C.